Reading from the N-terminus, the 442-residue chain is F-box protein KIB2 (442 aa).

The region spanning 62 to 109 (SKQPVLVLDLLRSILERLSFVDFHRGRCISLEWYSASESCLAVKNPTS) is the F-box domain. The Nuclear localization signal signature appears at 236–243 (HKKGDENY).

As to quaternary structure, interacts with ASK7/BIN2/SK21.

It localises to the cytoplasm. Its subcellular location is the nucleus. The protein localises to the nucleolus. In terms of biological role, component of SCF(ASK-cullin-F-box) E3 ubiquitin ligase complexes, which may mediate the ubiquitination and subsequent proteasomal degradation of target proteins. Required for brassinosteroid (BR) signal transduction. Mediates ASK7/BIN2/SK21 inactivation both by competing with substrate binding (e.g. BZR1) and by promoting its ubiquitination and subsequent proteasomal degradation. The polypeptide is F-box protein KIB2 (Arabidopsis thaliana (Mouse-ear cress)).